The following is a 477-amino-acid chain: Chromosomal replication initiator protein DnaA (477 aa).

The interval 1–87 (MSDRSDPTHA…AGVSNFAIVV (87 aa)) is domain I, interacts with DnaA modulators. The interval 87–132 (VNPEIAQDAFAQHPEPAAEQPYIETPTITAPTDNPGLPASPSRGDS) is domain II. Residues 112–131 (PTITAPTDNPGLPASPSRGD) are disordered. Residues 133–349 (RLNPKYGFDT…GTLIRVTAFA (217 aa)) form a domain III, AAA+ region region. 4 residues coordinate ATP: glycine 177, glycine 179, lysine 180, and threonine 181. Residues 350 to 477 (SLNKTPVDLA…IKQNHRYGKM (128 aa)) are domain IV, binds dsDNA.

It belongs to the DnaA family. As to quaternary structure, oligomerizes as a right-handed, spiral filament on DNA at oriC.

It localises to the cytoplasm. In terms of biological role, plays an essential role in the initiation and regulation of chromosomal replication. ATP-DnaA binds to the origin of replication (oriC) to initiate formation of the DNA replication initiation complex once per cell cycle. Binds the DnaA box (a 9 base pair repeat at the origin) and separates the double-stranded (ds)DNA. Forms a right-handed helical filament on oriC DNA; dsDNA binds to the exterior of the filament while single-stranded (ss)DNA is stabiized in the filament's interior. The ATP-DnaA-oriC complex binds and stabilizes one strand of the AT-rich DNA unwinding element (DUE), permitting loading of DNA polymerase. After initiation quickly degrades to an ADP-DnaA complex that is not apt for DNA replication. Binds acidic phospholipids. The sequence is that of Chromosomal replication initiator protein DnaA from Clavibacter michiganensis subsp. michiganensis (strain NCPPB 382).